The following is a 464-amino-acid chain: Glutamate--tRNA ligase (464 aa).

The 'HIGH' region motif lies at 9–19; that stretch reads PSPTGYLHIGG. The 'KMSKS' region motif lies at 242–246; it reads KISKR. Position 245 (Lys-245) interacts with ATP.

This sequence belongs to the class-I aminoacyl-tRNA synthetase family. Glutamate--tRNA ligase type 1 subfamily. Monomer.

The protein resides in the cytoplasm. The enzyme catalyses tRNA(Glu) + L-glutamate + ATP = L-glutamyl-tRNA(Glu) + AMP + diphosphate. In terms of biological role, catalyzes the attachment of glutamate to tRNA(Glu) in a two-step reaction: glutamate is first activated by ATP to form Glu-AMP and then transferred to the acceptor end of tRNA(Glu). In Neisseria meningitidis serogroup B (strain ATCC BAA-335 / MC58), this protein is Glutamate--tRNA ligase.